The primary structure comprises 86 residues: Large ribosomal subunit protein bL27 (86 aa).

Gly residues predominate over residues 1 to 10 (MAQKKGGGST). Residues 1 to 20 (MAQKKGGGSTRNGRDSESKR) are disordered.

This sequence belongs to the bacterial ribosomal protein bL27 family.

The sequence is that of Large ribosomal subunit protein bL27 from Bordetella parapertussis (strain 12822 / ATCC BAA-587 / NCTC 13253).